The primary structure comprises 332 residues: Methionine import ATP-binding protein MetN (332 aa).

The 238-residue stretch at 2-239 (ITFQDVSKTY…PASDTARRFV (238 aa)) folds into the ABC transporter domain. ATP is bound at residue 36–43 (GASGAGKS).

Belongs to the ABC transporter superfamily. Methionine importer (TC 3.A.1.24) family. In terms of assembly, the complex is composed of two ATP-binding proteins (MetN), two transmembrane proteins (MetI) and a solute-binding protein (MetQ).

The protein localises to the cell inner membrane. The enzyme catalyses L-methionine(out) + ATP + H2O = L-methionine(in) + ADP + phosphate + H(+). It carries out the reaction D-methionine(out) + ATP + H2O = D-methionine(in) + ADP + phosphate + H(+). Part of the ABC transporter complex MetNIQ involved in methionine import. Responsible for energy coupling to the transport system. The sequence is that of Methionine import ATP-binding protein MetN from Caulobacter vibrioides (strain ATCC 19089 / CIP 103742 / CB 15) (Caulobacter crescentus).